Here is a 436-residue protein sequence, read N- to C-terminus: RNA-binding motif, single-stranded-interacting protein 3 (436 aa).

Positions 28 to 56 are disordered; the sequence is APAPHPMAPPSPSTNSSSNNSSNNSSGEQ. The segment covering 30–39 has biased composition (pro residues); that stretch reads APHPMAPPSP. A compositionally biased stretch (low complexity) spans 40 to 53; that stretch reads STNSSSNNSSNNSS. 2 RRM domains span residues 60–133 and 139–224; these read TNLY…MAKQ and TNLY…FADG. Over residues 398–421 the composition is skewed to polar residues; that stretch reads TSPQTVAPSSQDTSGQQQQIAVDT. The segment at 398 to 436 is disordered; the sequence is TSPQTVAPSSQDTSGQQQQIAVDTSNEHAPAYSYQQSKP.

It localises to the cytoplasm. Functionally, binds poly(A) and poly(U) oligoribonucleotides. This is RNA-binding motif, single-stranded-interacting protein 3 (RBMS3) from Pongo abelii (Sumatran orangutan).